A 365-amino-acid polypeptide reads, in one-letter code: tRNA-specific 2-thiouridylase MnmA (365 aa).

ATP-binding positions include 9-16 (AMSGGVDS) and methionine 35. Cysteine 105 (nucleophile) is an active-site residue. A disulfide bridge links cysteine 105 with cysteine 203. Glycine 129 is an ATP binding site. An interaction with tRNA region spans residues 153 to 155 (KDQ). The Cysteine persulfide intermediate role is filled by cysteine 203. The interaction with tRNA stretch occupies residues 308–309 (RY).

It belongs to the MnmA/TRMU family.

It localises to the cytoplasm. The enzyme catalyses S-sulfanyl-L-cysteinyl-[protein] + uridine(34) in tRNA + AH2 + ATP = 2-thiouridine(34) in tRNA + L-cysteinyl-[protein] + A + AMP + diphosphate + H(+). Functionally, catalyzes the 2-thiolation of uridine at the wobble position (U34) of tRNA, leading to the formation of s(2)U34. The protein is tRNA-specific 2-thiouridylase MnmA of Pelotomaculum thermopropionicum (strain DSM 13744 / JCM 10971 / SI).